We begin with the raw amino-acid sequence, 322 residues long: tRNA (guanine-N(7)-)-methyltransferase (322 aa).

3 residues coordinate S-adenosyl-L-methionine: E29, E55, and D105. The active site involves D105. Positions 109 and 141 each coordinate substrate.

This sequence belongs to the class I-like SAM-binding methyltransferase superfamily. TrmB family.

The enzyme catalyses guanosine(46) in tRNA + S-adenosyl-L-methionine = N(7)-methylguanosine(46) in tRNA + S-adenosyl-L-homocysteine. The protein operates within tRNA modification; N(7)-methylguanine-tRNA biosynthesis. Catalyzes the formation of N(7)-methylguanine at position 46 (m7G46) in tRNA. The polypeptide is tRNA (guanine-N(7)-)-methyltransferase (Deinococcus radiodurans (strain ATCC 13939 / DSM 20539 / JCM 16871 / CCUG 27074 / LMG 4051 / NBRC 15346 / NCIMB 9279 / VKM B-1422 / R1)).